The chain runs to 283 residues: Phosphate import ATP-binding protein PstB (283 aa).

Over residues 1–20 the composition is skewed to polar residues; that stretch reads MAQTLAQTKQISQSHTFDVS. The interval 1–32 is disordered; that stretch reads MAQTLAQTKQISQSHTFDVSQSHHKTPDDTNS. Residues 37 to 278 enclose the ABC transporter domain; sequence YSTQNLDLWY…PSNKKTEDYI (242 aa). Position 69-76 (69-76) interacts with ATP; sequence GPSGCGKS.

The protein belongs to the ABC transporter superfamily. Phosphate importer (TC 3.A.1.7) family. The complex is composed of two ATP-binding proteins (PstB), two transmembrane proteins (PstC and PstA) and a solute-binding protein (PstS).

It is found in the cell membrane. It catalyses the reaction phosphate(out) + ATP + H2O = ADP + 2 phosphate(in) + H(+). Part of the ABC transporter complex PstSACB involved in phosphate import. Responsible for energy coupling to the transport system. The protein is Phosphate import ATP-binding protein PstB of Staphylococcus aureus (strain USA300).